Consider the following 379-residue polypeptide: Mating-type protein MAT-1 (379 aa).

The alpha box DNA-binding region spans 60–117 (KARKALNAFVGFRCYYITIPMFKPWPMKKLSNLIGLLWEADPNKSLWSLMAKAWSTIR).

It belongs to the MATALPHA1 family.

The protein resides in the nucleus. Mating type proteins are sequence specific DNA-binding proteins that act as master switches in fungal differentiation by controlling gene expression in a cell type-specific fashion. Transcriptional activator that induces the transcription of alpha-specific genes. The polypeptide is Mating-type protein MAT-1 (MAT1) (Cochliobolus carbonum (strain 26-R-13) (Maize leaf spot fungus)).